The primary structure comprises 172 residues: Shikimate kinase (172 aa).

11–16 (GCGKST) provides a ligand contact to ATP. Ser15 is a binding site for Mg(2+). 3 residues coordinate substrate: Asp33, Arg57, and Gly80. Residue Arg120 participates in ATP binding. Arg142 is a substrate binding site. Arg158 serves as a coordination point for ATP.

Belongs to the shikimate kinase family. Monomer. Mg(2+) is required as a cofactor.

It localises to the cytoplasm. The catalysed reaction is shikimate + ATP = 3-phosphoshikimate + ADP + H(+). It functions in the pathway metabolic intermediate biosynthesis; chorismate biosynthesis; chorismate from D-erythrose 4-phosphate and phosphoenolpyruvate: step 5/7. Catalyzes the specific phosphorylation of the 3-hydroxyl group of shikimic acid using ATP as a cosubstrate. The sequence is that of Shikimate kinase from Flavobacterium johnsoniae (strain ATCC 17061 / DSM 2064 / JCM 8514 / BCRC 14874 / CCUG 350202 / NBRC 14942 / NCIMB 11054 / UW101) (Cytophaga johnsonae).